The chain runs to 418 residues: Sprouty-related, EVH1 domain-containing protein 2 (418 aa).

One can recognise a WH1 domain in the interval 5 to 122 (THPDDDSYIV…RGVRKAIEDL (118 aa)). The interval 127–171 (TTSSSTIHNEAELGDDDVFTTATDSSSNSSQKREQPTRTISSPTS) is disordered. The segment covering 146–156 (TTATDSSSNSS) has biased composition (polar residues). Residues 201–257 (PYRQVSFPDDDEEIVRINPREKIWMTGYEDYRHAPVRGKYPDPSEDADSSYVRFAKG) form the KBD domain. Ser206 is modified (phosphoserine). Phosphotyrosine occurs at positions 228 and 231. Residues 275-302 (GLGEDPKGRGGSVIKTQPSRGKSRRRKE) are disordered. The SPR domain occupies 308–416 (RCVYCRDMFN…CRCCGGKHKA (109 aa)).

Homodimer and heterodimer. Able to interact with SPRED1 to form heterodimers. Interacts with RAS. May interact with ZDHHC13 (via ANK repeats) and ZDHHC17 (via ANK repeats). Interacts with TESK1. Interacts with NF1. Post-translationally, phosphorylated on serine and threonine residues. Phosphorylated on tyrosine. Phosphorylation of Tyr-228 and Tyr-231 are required for ubiquitination. Ubiquitinated; leading to degradation by the proteasome. As to expression, expressed in liver, skin, small intestine, salivary gland and prostate.

The protein localises to the cell membrane. The protein resides in the cytoplasmic vesicle. It is found in the secretory vesicle membrane. It localises to the cytoplasm. Negatively regulates Ras signaling pathways and downstream activation of MAP kinases. Recruits and translocates NF1 to the cell membrane, thereby enabling NF1-dependent hydrolysis of active GTP-bound Ras to inactive GDP-bound Ras. Inhibits fibroblast growth factor (FGF)-induced retinal lens fiber differentiation, probably by inhibiting FGF-mediated phosphorylation of ERK1/2. Inhibits TGFB-induced epithelial-to-mesenchymal transition in lens epithelial cells. The protein is Sprouty-related, EVH1 domain-containing protein 2 (SPRED2) of Homo sapiens (Human).